A 238-amino-acid chain; its full sequence is uncharacterized protein (238 aa).

An N-terminal signal peptide occupies residues 1–28; the sequence is MSRNSRGSGRYVFVVLACVFGYTRAVHA.

This is an uncharacterized protein from Treponema pallidum (strain Nichols).